The chain runs to 59 residues: Large ribosomal subunit protein bL32c (59 aa).

The disordered stretch occupies residues 37-59 (SRSFSSGNEHPKPKGFSGQQTNK).

The protein belongs to the bacterial ribosomal protein bL32 family.

Its subcellular location is the plastid. It is found in the chloroplast. In Hordeum vulgare (Barley), this protein is Large ribosomal subunit protein bL32c.